The primary structure comprises 212 residues: Pyridoxine/pyridoxamine 5'-phosphate oxidase (212 aa).

Substrate is bound by residues 7 to 10 and K65; that span reads RAKY. FMN-binding positions include 60–65, 75–76, K82, and Q104; these read RTVLLK and FT. Residues Y122, R126, and S130 each contribute to the substrate site. FMN-binding positions include 139 to 140 and W184; that span reads QS. 190-192 serves as a coordination point for substrate; sequence RLH. FMN is bound at residue R194.

The protein belongs to the pyridoxamine 5'-phosphate oxidase family. As to quaternary structure, homodimer. Requires FMN as cofactor.

The catalysed reaction is pyridoxamine 5'-phosphate + O2 + H2O = pyridoxal 5'-phosphate + H2O2 + NH4(+). It catalyses the reaction pyridoxine 5'-phosphate + O2 = pyridoxal 5'-phosphate + H2O2. It functions in the pathway cofactor metabolism; pyridoxal 5'-phosphate salvage; pyridoxal 5'-phosphate from pyridoxamine 5'-phosphate: step 1/1. It participates in cofactor metabolism; pyridoxal 5'-phosphate salvage; pyridoxal 5'-phosphate from pyridoxine 5'-phosphate: step 1/1. Functionally, catalyzes the oxidation of either pyridoxine 5'-phosphate (PNP) or pyridoxamine 5'-phosphate (PMP) into pyridoxal 5'-phosphate (PLP). The polypeptide is Pyridoxine/pyridoxamine 5'-phosphate oxidase (Aliarcobacter butzleri (strain RM4018) (Arcobacter butzleri)).